Here is a 263-residue protein sequence, read N- to C-terminus: Endonuclease 8 (263 aa).

P2 functions as the Schiff-base intermediate with DNA in the catalytic mechanism. E3 functions as the Proton donor in the catalytic mechanism. K53 acts as the Proton donor; for beta-elimination activity in catalysis. DNA-binding residues include Q70, R125, and N169. The FPG-type zinc-finger motif lies at 229–263 (KVFHRDGEVCERCGGIIEKTTLSSRPFYWCPHCQK). Catalysis depends on R253, which acts as the Proton donor; for delta-elimination activity.

The protein belongs to the FPG family. Zn(2+) serves as cofactor.

It carries out the reaction 2'-deoxyribonucleotide-(2'-deoxyribose 5'-phosphate)-2'-deoxyribonucleotide-DNA = a 3'-end 2'-deoxyribonucleotide-(2,3-dehydro-2,3-deoxyribose 5'-phosphate)-DNA + a 5'-end 5'-phospho-2'-deoxyribonucleoside-DNA + H(+). Functionally, involved in base excision repair of DNA damaged by oxidation or by mutagenic agents. Acts as a DNA glycosylase that recognizes and removes damaged bases. Has a preference for oxidized pyrimidines, such as thymine glycol, 5,6-dihydrouracil and 5,6-dihydrothymine. Has AP (apurinic/apyrimidinic) lyase activity and introduces nicks in the DNA strand. Cleaves the DNA backbone by beta-delta elimination to generate a single-strand break at the site of the removed base with both 3'- and 5'-phosphates. The polypeptide is Endonuclease 8 (Salmonella newport (strain SL254)).